The chain runs to 249 residues: RING finger protein 223 (249 aa).

Residues M1–R44 form a disordered region. Over residues R17 to R44 the composition is skewed to low complexity. The RING-type zinc-finger motif lies at C51–R102. Residues L199–L219 traverse the membrane as a helical segment. A disordered region spans residues P230–N249. The span at A235–N249 shows a compositional bias: low complexity.

It is found in the membrane. The sequence is that of RING finger protein 223 (RNF223) from Homo sapiens (Human).